Here is a 193-residue protein sequence, read N- to C-terminus: Peptidyl-tRNA hydrolase (193 aa).

Residue tyrosine 16 coordinates tRNA. Catalysis depends on histidine 21, which acts as the Proton acceptor. Phenylalanine 66, asparagine 68, and asparagine 114 together coordinate tRNA.

This sequence belongs to the PTH family. As to quaternary structure, monomer.

Its subcellular location is the cytoplasm. It catalyses the reaction an N-acyl-L-alpha-aminoacyl-tRNA + H2O = an N-acyl-L-amino acid + a tRNA + H(+). Hydrolyzes ribosome-free peptidyl-tRNAs (with 1 or more amino acids incorporated), which drop off the ribosome during protein synthesis, or as a result of ribosome stalling. In terms of biological role, catalyzes the release of premature peptidyl moieties from peptidyl-tRNA molecules trapped in stalled 50S ribosomal subunits, and thus maintains levels of free tRNAs and 50S ribosomes. The protein is Peptidyl-tRNA hydrolase of Trichlorobacter lovleyi (strain ATCC BAA-1151 / DSM 17278 / SZ) (Geobacter lovleyi).